We begin with the raw amino-acid sequence, 571 residues long: Urease subunit alpha (571 aa).

The Urease domain occupies 133–571 (GGIDTHVHFI…LPLTQRYFLF (439 aa)). His-138, His-140, and Lys-221 together coordinate Ni(2+). Lys-221 carries the post-translational modification N6-carboxylysine. His-223 lines the substrate pocket. The Ni(2+) site is built by His-250 and His-276. His-324 (proton donor) is an active-site residue. Asp-364 provides a ligand contact to Ni(2+).

It belongs to the metallo-dependent hydrolases superfamily. Urease alpha subunit family. In terms of assembly, heterotrimer of UreA (gamma), UreB (beta) and UreC (alpha) subunits. Three heterotrimers associate to form the active enzyme. Requires Ni cation as cofactor. In terms of processing, carboxylation allows a single lysine to coordinate two nickel ions.

It is found in the cytoplasm. The catalysed reaction is urea + 2 H2O + H(+) = hydrogencarbonate + 2 NH4(+). It participates in nitrogen metabolism; urea degradation; CO(2) and NH(3) from urea (urease route): step 1/1. The polypeptide is Urease subunit alpha (Staphylococcus epidermidis (strain ATCC 35984 / DSM 28319 / BCRC 17069 / CCUG 31568 / BM 3577 / RP62A)).